Reading from the N-terminus, the 715-residue chain is MARTTAINRYRNIGICAHVDAGKTTTTERILFYTGLSHKMGEVHDGAATTDWMVQEQERGITITSAAVTTFWKGSRGQYDNYRVNVIDTPGHVDFTIEVERSLRVLDGAVVVFCGTSGVEPQSETVWRQANKYGVPRVVYVNKMDRAGANFLRVVGQIKNRLGHTPVPVQLAIGAEDNFEGQVDLIKMKAIYWNDDDKGTTYREEEIPADMLDLANEWRSNMVEAAAEANEELMNKYLEEGDLTVEEIKAGLRARTLASEIVPAVCGSSFKNKGVPLVLDAVIDFLPAPTEIPAIKGIHPDLIEKPKDELVEADYDERHADDAEPFSALAFKIATDPFVGTLTFVRVYSGFLSSGDSVINSVKGKKERVGRMVQMHANQREEIKEVRAGDIAALIGMKDVTTGDTLCDLDKQIILERMDFPEPVISVAVEPKTKQDQEKMGIALGKLAQEDPSFRVKTDEETGQTIISGMGELHLDILVDRMKREFNVEANIGKPQVSYREKISKSNVEIEGKFVRQSGGRGQFGHCWIRFSEPDVDANGNITEGLVFTNEVVGGVVPKEYIPAIQKGIEEQMKNGVVAGYPLIGLKATVFDGSYHDVDSNEMAFKVAASMATKQLAQKGGGVVLEPIMKVEVVTPEDYMGDVMGDLNRRRGLIQGMDDSVSGKVIRAEVPLGEMFGYATDVRSMSQGRASYSMEFSKYAEAPSNIVEALVKKQG.

A tr-type G domain is found at 8–290 (NRYRNIGICA…AVIDFLPAPT (283 aa)). GTP-binding positions include 17–24 (AHVDAGKT), 88–92 (DTPGH), and 142–145 (NKMD).

Belongs to the TRAFAC class translation factor GTPase superfamily. Classic translation factor GTPase family. EF-G/EF-2 subfamily.

The protein localises to the cytoplasm. Functionally, catalyzes the GTP-dependent ribosomal translocation step during translation elongation. During this step, the ribosome changes from the pre-translocational (PRE) to the post-translocational (POST) state as the newly formed A-site-bound peptidyl-tRNA and P-site-bound deacylated tRNA move to the P and E sites, respectively. Catalyzes the coordinated movement of the two tRNA molecules, the mRNA and conformational changes in the ribosome. The protein is Elongation factor G of Pseudomonas fluorescens (strain ATCC BAA-477 / NRRL B-23932 / Pf-5).